A 590-amino-acid polypeptide reads, in one-letter code: Pescadillo homolog (590 aa).

A BRCT domain is found at 332–422 (VCKSLFKDLK…IILPTEKYLV (91 aa)). A disordered region spans residues 561–590 (AMKISQSRKRSGVEIIEQRKKRLNDTQPSS).

This sequence belongs to the pescadillo family. As to quaternary structure, interacts with BOP1 and WDR12. Interacts with NSN1. As to expression, expressed in shoot and root apical meristems, epidermal cells and vasculature of developing leaves, trichome progenitor cells, young flowers, developing pollen grains and ovules, and mature pollen grains.

It is found in the nucleus. It localises to the nucleolus. The protein localises to the nucleoplasm. Its function is as follows. Required for maturation of ribosomal RNAs and formation of the large ribosomal subunit. Plays an essential role in cell growth and survival through its regulation of ribosome biogenesis and mitotic progression. Required for normal root cell growth and differentiation. This Arabidopsis thaliana (Mouse-ear cress) protein is Pescadillo homolog.